A 527-amino-acid polypeptide reads, in one-letter code: Putative GTP-binding protein 6 (527 aa).

Positions 306–470 (PIISILGYTN…QVETAVMKST (165 aa)) constitute a Hflx-type G domain. Residues 312–319 (GYTNSGKT), 338–342 (FATLD), 360–363 (DTIG), 429–432 (NKID), and 448–450 (SAL) contribute to the GTP site. Mg(2+) is bound by residues Thr319 and Thr340.

This sequence belongs to the TRAFAC class OBG-HflX-like GTPase superfamily. HflX GTPase family. It depends on Mg(2+) as a cofactor.

The sequence is that of Putative GTP-binding protein 6 (gtpbp6) from Xenopus laevis (African clawed frog).